Consider the following 70-residue polypeptide: Large ribosomal subunit protein bL31 (70 aa).

Residues Cys16, Cys18, Cys37, and Cys40 each coordinate Zn(2+).

This sequence belongs to the bacterial ribosomal protein bL31 family. Type A subfamily. As to quaternary structure, part of the 50S ribosomal subunit. Zn(2+) is required as a cofactor.

In terms of biological role, binds the 23S rRNA. This is Large ribosomal subunit protein bL31 from Cronobacter sakazakii (strain ATCC BAA-894) (Enterobacter sakazakii).